We begin with the raw amino-acid sequence, 368 residues long: 3-isopropylmalate dehydrogenase (368 aa).

Position 77 to 88 (77 to 88) interacts with NAD(+); it reads GPKWGTGAVRPE. Substrate-binding residues include R95, R105, R134, and D226. Mg(2+) contacts are provided by D226, D251, and D255. Residue 290-301 coordinates NAD(+); sequence GSAPDLPANKVN.

This sequence belongs to the isocitrate and isopropylmalate dehydrogenases family. In terms of assembly, homodimer. It depends on Mg(2+) as a cofactor. Mn(2+) serves as cofactor.

The protein resides in the cytoplasm. The enzyme catalyses (2R,3S)-3-isopropylmalate + NAD(+) = 4-methyl-2-oxopentanoate + CO2 + NADH. Its pathway is amino-acid biosynthesis; L-leucine biosynthesis; L-leucine from 3-methyl-2-oxobutanoate: step 3/4. Functionally, catalyzes the oxidation of 3-carboxy-2-hydroxy-4-methylpentanoate (3-isopropylmalate) to 3-carboxy-4-methyl-2-oxopentanoate. The product decarboxylates to 4-methyl-2 oxopentanoate. The polypeptide is 3-isopropylmalate dehydrogenase (LEU2) (Kodamaea ohmeri (Yeast)).